The chain runs to 321 residues: Cathepsin O (321 aa).

The signal sequence occupies residues 1-23 (MDVRALPWLPWLLWLLCRGGGDA). The propeptide at 24 to 107 (DSRAPFTPTW…EVHMSIPNVS (84 aa)) is activation peptide. N-linked (GlcNAc...) asparagine glycosylation is found at Asn-62 and Asn-105. 3 disulfides stabilise this stretch: Cys-129-Cys-170, Cys-163-Cys-204, and Cys-262-Cys-310. Cys-132 is an active-site residue. Residues His-269 and Asn-289 contribute to the active site.

Belongs to the peptidase C1 family. Expressed in all tissues examined. High levels seen in the ovary, kidney and placenta while low levels seen in thymus and skeletal muscle.

Its subcellular location is the lysosome. The catalysed reaction is The recombinant human enzyme hydrolyzes synthetic endopeptidase substrates including Z-Phe-Arg-NHMec and Z-Arg-Arg-NHMec.. Its function is as follows. Proteolytic enzyme possibly involved in normal cellular protein degradation and turnover. This is Cathepsin O (CTSO) from Homo sapiens (Human).